Consider the following 72-residue polypeptide: Cytochrome c oxidase subunit 8C, mitochondrial (72 aa).

Residues 1-29 constitute a mitochondrion transit peptide; sequence MSRLLLLCSSLLRHRAVLFSKPGHPGRLS. Residues 30 to 40 are Mitochondrial matrix-facing; sequence HSESPQKKILS. The helical transmembrane segment at 41-64 threads the bilayer; it reads PTESAVGIVVFFTTFYIPAAYVLS. Over 65 to 72 the chain is Mitochondrial intermembrane; it reads SLKYFKGE.

Belongs to the cytochrome c oxidase VIII family. Component of the cytochrome c oxidase (complex IV, CIV), a multisubunit enzyme composed of 14 subunits. The complex is composed of a catalytic core of 3 subunits MT-CO1, MT-CO2 and MT-CO3, encoded in the mitochondrial DNA, and 11 supernumerary subunits COX4I, COX5A, COX5B, COX6A, COX6B, COX6C, COX7A, COX7B, COX7C, COX8 and NDUFA4, which are encoded in the nuclear genome. The complex exists as a monomer or a dimer and forms supercomplexes (SCs) in the inner mitochondrial membrane with NADH-ubiquinone oxidoreductase (complex I, CI) and ubiquinol-cytochrome c oxidoreductase (cytochrome b-c1 complex, complex III, CIII), resulting in different assemblies (supercomplex SCI(1)III(2)IV(1) and megacomplex MCI(2)III(2)IV(2)).

It is found in the mitochondrion inner membrane. It functions in the pathway energy metabolism; oxidative phosphorylation. Functionally, component of the cytochrome c oxidase, the last enzyme in the mitochondrial electron transport chain which drives oxidative phosphorylation. The respiratory chain contains 3 multisubunit complexes succinate dehydrogenase (complex II, CII), ubiquinol-cytochrome c oxidoreductase (cytochrome b-c1 complex, complex III, CIII) and cytochrome c oxidase (complex IV, CIV), that cooperate to transfer electrons derived from NADH and succinate to molecular oxygen, creating an electrochemical gradient over the inner membrane that drives transmembrane transport and the ATP synthase. Cytochrome c oxidase is the component of the respiratory chain that catalyzes the reduction of oxygen to water. Electrons originating from reduced cytochrome c in the intermembrane space (IMS) are transferred via the dinuclear copper A center (CU(A)) of subunit 2 and heme A of subunit 1 to the active site in subunit 1, a binuclear center (BNC) formed by heme A3 and copper B (CU(B)). The BNC reduces molecular oxygen to 2 water molecules using 4 electrons from cytochrome c in the IMS and 4 protons from the mitochondrial matrix. The polypeptide is Cytochrome c oxidase subunit 8C, mitochondrial (Cox8c) (Mus musculus (Mouse)).